The following is a 92-amino-acid chain: Small ribosomal subunit protein uS19c (92 aa).

The protein belongs to the universal ribosomal protein uS19 family.

The protein localises to the plastid. The protein resides in the chloroplast. Functionally, protein S19 forms a complex with S13 that binds strongly to the 16S ribosomal RNA. This chain is Small ribosomal subunit protein uS19c, found in Cucumis sativus (Cucumber).